Consider the following 1066-residue polypeptide: Thyrotropin-releasing hormone-degrading ectoenzyme (1066 aa).

Over residues 1–14 (MALDGERGEQEEEK) the composition is skewed to basic and acidic residues. Residues 1-43 (MALDGERGEQEEEKKKKKKKKKRKKKEEEGAEKSSSPFAATMG) are disordered. The Cytoplasmic segment spans residues 1–81 (MALDGERGEQ…ERHIAVHKRL (81 aa)). The span at 15–25 (KKKKKKKKRKK) shows a compositional bias: basic residues. Threonine 71 carries the phosphothreonine; by PKC modification. Residues 82 to 102 (VLAFAVSIVALLAVTMLAVLL) traverse the membrane as a helical; Signal-anchor for type II membrane protein segment. Residues 103-1066 (SLRFDECGAS…FQWLGKAMRH (964 aa)) lie on the Extracellular side of the membrane. A disordered region spans residues 117 to 177 (GTDGGLGGFP…SEEEQEQWQP (61 aa)). A compositionally biased stretch (gly residues) spans 118–127 (TDGGLGGFPE). Asparagine 131 carries N-linked (GlcNAc...) asparagine glycosylation. Residues 143–154 (HAGEESSQREIG) show a composition bias toward basic and acidic residues. 4 N-linked (GlcNAc...) asparagine glycosylation sites follow: asparagine 202, asparagine 217, asparagine 264, and asparagine 380. 446–450 (AAMEN) contributes to the substrate binding site. Histidine 482 is a binding site for Zn(2+). Glutamate 483 acts as the Proton acceptor in catalysis. The Zn(2+) site is built by histidine 486 and glutamate 505. Residues asparagine 647, asparagine 676, asparagine 691, asparagine 705, asparagine 726, asparagine 842, and asparagine 948 are each glycosylated (N-linked (GlcNAc...) asparagine).

Belongs to the peptidase M1 family. Homodimer; disulfide-linked. It depends on Zn(2+) as a cofactor. As to expression, predominantly expressed in brain and pituitary. Lower levels in lung and liver.

The protein localises to the membrane. It catalyses the reaction Release of the N-terminal pyroglutamyl group from pGlu-|-His-Xaa tripeptides and pGlu-|-His-Xaa-Gly tetrapeptides.. Specific inactivation of TRH after its release. This chain is Thyrotropin-releasing hormone-degrading ectoenzyme (Trhde), found in Rattus norvegicus (Rat).